A 130-amino-acid chain; its full sequence is Small ribosomal subunit protein uS8 (130 aa).

This sequence belongs to the universal ribosomal protein uS8 family. In terms of assembly, part of the 30S ribosomal subunit. Contacts proteins S5 and S12.

One of the primary rRNA binding proteins, it binds directly to 16S rRNA central domain where it helps coordinate assembly of the platform of the 30S subunit. The chain is Small ribosomal subunit protein uS8 from Haemophilus influenzae (strain 86-028NP).